The primary structure comprises 199 residues: Potassium-transporting ATPase KdpC subunit 2 (199 aa).

Residues isoleucine 13 to glycine 33 traverse the membrane as a helical segment.

Belongs to the KdpC family. As to quaternary structure, the system is composed of three essential subunits: KdpA, KdpB and KdpC.

It is found in the cell inner membrane. Its function is as follows. Part of the high-affinity ATP-driven potassium transport (or Kdp) system, which catalyzes the hydrolysis of ATP coupled with the electrogenic transport of potassium into the cytoplasm. This subunit acts as a catalytic chaperone that increases the ATP-binding affinity of the ATP-hydrolyzing subunit KdpB by the formation of a transient KdpB/KdpC/ATP ternary complex. The protein is Potassium-transporting ATPase KdpC subunit 2 of Nostoc sp. (strain PCC 7120 / SAG 25.82 / UTEX 2576).